The chain runs to 229 residues: Multiple organellar RNA editing factor 5, chloroplastic/mitochondrial (229 aa).

The transit peptide at 1 to 57 (MAKTLARSTASRITKRLISTSGATTPSPSYILSRRSTPVFSHAVGFISSLNRFTTIR) directs the protein to the chloroplast and mitochondrion.

This sequence belongs to the MORF family. Homodimer and heterodimers with MORF8/RIP1, MORF3/RIP3, MORF6/RIP6, MORF7/RIP7 and MORF9/RIP9.

Its subcellular location is the mitochondrion. It localises to the plastid. It is found in the chloroplast. Involved in organellar RNA editing. Required for the processing of few RNA editing sites in mitochondria. This is Multiple organellar RNA editing factor 5, chloroplastic/mitochondrial from Arabidopsis thaliana (Mouse-ear cress).